Here is a 347-residue protein sequence, read N- to C-terminus: Phenylalanine--tRNA ligase alpha subunit (347 aa).

Mg(2+) is bound at residue glutamate 261.

Belongs to the class-II aminoacyl-tRNA synthetase family. Phe-tRNA synthetase alpha subunit type 1 subfamily. As to quaternary structure, tetramer of two alpha and two beta subunits. It depends on Mg(2+) as a cofactor.

The protein resides in the cytoplasm. It carries out the reaction tRNA(Phe) + L-phenylalanine + ATP = L-phenylalanyl-tRNA(Phe) + AMP + diphosphate + H(+). In Streptococcus thermophilus (strain ATCC BAA-491 / LMD-9), this protein is Phenylalanine--tRNA ligase alpha subunit.